A 440-amino-acid polypeptide reads, in one-letter code: Asparagine--tRNA ligase (440 aa).

The protein belongs to the class-II aminoacyl-tRNA synthetase family. Homodimer.

The protein resides in the cytoplasm. It carries out the reaction tRNA(Asn) + L-asparagine + ATP = L-asparaginyl-tRNA(Asn) + AMP + diphosphate + H(+). The protein is Asparagine--tRNA ligase of Roseiflexus sp. (strain RS-1).